We begin with the raw amino-acid sequence, 334 residues long: N-acetylmuramate/N-acetylglucosamine kinase (334 aa).

Belongs to the kinase AmgK family.

It catalyses the reaction N-acetyl-D-muramate + ATP = N-acetyl-alpha-D-muramate 1-phosphate + ADP + H(+). The catalysed reaction is N-acetyl-D-glucosamine + ATP = N-acetyl-alpha-D-glucosamine 1-phosphate + ADP + H(+). It participates in cell wall biogenesis; peptidoglycan recycling. Its function is as follows. Sugar kinase that catalyzes the ATP-dependent phosphorylation of N-acetylmuramate (MurNAc) and N-acetylglucosamine (GlcNAc) at its C1 hydroxyl group, leading to MurNAc alpha-1P and GlcNAc alpha-1P, respectively. Is likely involved in peptidoglycan recycling as part of a cell wall recycling pathway that bypasses de novo biosynthesis of the peptidoglycan precursor UDP-MurNAc. Is able to complement the fosfomycin sensitivity phenotype of a P.putida mutant lacking amgK. This Neisseria meningitidis serogroup B (strain ATCC BAA-335 / MC58) protein is N-acetylmuramate/N-acetylglucosamine kinase.